We begin with the raw amino-acid sequence, 334 residues long: Large ribosomal subunit protein uL3 (334 aa).

Over residues 1–10 (MGMKKNRPRR) the composition is skewed to basic residues. Positions 1–21 (MGMKKNRPRRGSLAFSPRKRA) are disordered.

The protein belongs to the universal ribosomal protein uL3 family. In terms of assembly, part of the 50S ribosomal subunit. Forms a cluster with proteins L14 and L24e.

One of the primary rRNA binding proteins, it binds directly near the 3'-end of the 23S rRNA, where it nucleates assembly of the 50S subunit. In Methanococcus maripaludis (strain C5 / ATCC BAA-1333), this protein is Large ribosomal subunit protein uL3.